A 39-amino-acid polypeptide reads, in one-letter code: Cytochrome b559 subunit beta (39 aa).

Residues 14-30 (WLAIHGLAVPTVFFLGS) traverse the membrane as a helical segment. A heme-binding site is contributed by H18.

It belongs to the PsbE/PsbF family. In terms of assembly, heterodimer of an alpha subunit and a beta subunit. PSII is composed of 1 copy each of membrane proteins PsbA, PsbB, PsbC, PsbD, PsbE, PsbF, PsbH, PsbI, PsbJ, PsbK, PsbL, PsbM, PsbT, PsbX, PsbY, PsbZ, Psb30/Ycf12, at least 3 peripheral proteins of the oxygen-evolving complex and a large number of cofactors. It forms dimeric complexes. It depends on heme b as a cofactor.

It localises to the plastid. Its subcellular location is the chloroplast thylakoid membrane. Functionally, this b-type cytochrome is tightly associated with the reaction center of photosystem II (PSII). PSII is a light-driven water:plastoquinone oxidoreductase that uses light energy to abstract electrons from H(2)O, generating O(2) and a proton gradient subsequently used for ATP formation. It consists of a core antenna complex that captures photons, and an electron transfer chain that converts photonic excitation into a charge separation. This is Cytochrome b559 subunit beta from Psilotum nudum (Whisk fern).